We begin with the raw amino-acid sequence, 204 residues long: HTH-type transcriptional repressor KstR2 (204 aa).

Residues 13-73 (SGRRTELLDI…EILRGFLDDL (61 aa)) form the HTH tetR-type domain. The H-T-H motif DNA-binding region spans 36 to 55 (TVRDIADAAGILSGSLYHHF).

In terms of assembly, homodimer.

Functionally, controls the expression of a small regulon that may play a role in the utilization of cholesterol. The sequence is that of HTH-type transcriptional repressor KstR2 (kstR2) from Rhodococcus jostii (strain RHA1).